The chain runs to 248 residues: NH(3)-dependent NAD(+) synthetase (248 aa).

Residue 31–38 coordinates ATP; it reads GLSGGVDS. D37 provides a ligand contact to Mg(2+). Position 114 (R114) interacts with deamido-NAD(+). T134 is a binding site for ATP. E139 lines the Mg(2+) pocket. The deamido-NAD(+) site is built by K147 and D154. The ATP site is built by K163 and T185. A deamido-NAD(+)-binding site is contributed by 232 to 233; that stretch reads HK.

It belongs to the NAD synthetase family. Homodimer.

It carries out the reaction deamido-NAD(+) + NH4(+) + ATP = AMP + diphosphate + NAD(+) + H(+). Its pathway is cofactor biosynthesis; NAD(+) biosynthesis; NAD(+) from deamido-NAD(+) (ammonia route): step 1/1. Functionally, catalyzes the ATP-dependent amidation of deamido-NAD to form NAD. Uses ammonia as a nitrogen source. The polypeptide is NH(3)-dependent NAD(+) synthetase (Mycoplasma pneumoniae (strain ATCC 29342 / M129 / Subtype 1) (Mycoplasmoides pneumoniae)).